A 445-amino-acid chain; its full sequence is Argininosuccinate synthase (445 aa).

ATP contacts are provided by residues 17 to 25 (AFSGGLDTS) and alanine 43. L-citrulline is bound at residue tyrosine 99. ATP is bound by residues glycine 129 and threonine 131. L-aspartate contacts are provided by threonine 131, asparagine 135, and aspartate 136. Asparagine 135 contributes to the L-citrulline binding site. Aspartate 136 provides a ligand contact to ATP. L-citrulline is bound by residues arginine 139 and serine 192. ATP is bound at residue aspartate 194. Residues threonine 201, glutamate 203, and glutamate 280 each coordinate L-citrulline.

Belongs to the argininosuccinate synthase family. Type 2 subfamily. As to quaternary structure, homotetramer.

The protein localises to the cytoplasm. It carries out the reaction L-citrulline + L-aspartate + ATP = 2-(N(omega)-L-arginino)succinate + AMP + diphosphate + H(+). It participates in amino-acid biosynthesis; L-arginine biosynthesis; L-arginine from L-ornithine and carbamoyl phosphate: step 2/3. The chain is Argininosuccinate synthase from Acidobacterium capsulatum (strain ATCC 51196 / DSM 11244 / BCRC 80197 / JCM 7670 / NBRC 15755 / NCIMB 13165 / 161).